The primary structure comprises 416 residues: Gap junction alpha-3 protein (416 aa).

The stretch at 2 to 15 is an intramembrane region; that stretch reads GDWSFLGRLLENAQ. Topologically, residues 16–19 are cytoplasmic; that stretch reads EHST. The chain crosses the membrane as a helical span at residues 20-40; that stretch reads VIGKVWLTVLFIFRILVLGAA. Residues 41 to 71 lie on the Extracellular side of the membrane; sequence AEEVWGDEQSDFTCNTQQPGCENVCYDRAFP. 3 disulfides stabilise this stretch: cysteine 54–cysteine 198, cysteine 61–cysteine 192, and cysteine 65–cysteine 187. Residues 72 to 92 form a helical membrane-spanning segment; that stretch reads ISHIRFWALQIIFVSTPTLIY. Residues 93-158 are Cytoplasmic-facing; that stretch reads LGHVLHIVRM…GALLRTYVFN (66 aa). Residues 110–128 show a composition bias toward basic and acidic residues; sequence EEELLRRDNPQHGRGREPM. Residues 110-141 form a disordered region; the sequence is EEELLRRDNPQHGRGREPMRTGSPRDPPLRDD. A helical transmembrane segment spans residues 159 to 179; sequence IIFKTLFEVGFIAGQYFLYGF. Residues 180–207 are Extracellular-facing; that stretch reads QLQPLYRCDRWPCPNTVDCFISRPTEKT. The helical transmembrane segment at 208 to 228 threads the bilayer; that stretch reads IFVIFMLAVACASLVLNMLEI. At 229-416 the chain is on the cytoplasmic side; the sequence is YHLGWKKLKQ…GRARPGDLAI (188 aa). The segment at 336 to 416 is disordered; it reads GAEPQTPASK…GRARPGDLAI (81 aa). The segment covering 342–353 has biased composition (low complexity); sequence PASKPSSAASSP.

This sequence belongs to the connexin family. Alpha-type (group II) subfamily. As to quaternary structure, a hemichannel or connexon is composed of a hexamer of connexins. A functional gap junction is formed by the apposition of two hemichannels. Forms heteromeric channels with GJA8. Detected in eye lens (at protein level). Most abundant in lens, but also present in heart and kidney.

It localises to the cell membrane. Its subcellular location is the cell junction. It is found in the gap junction. Its function is as follows. Structural component of lens fiber gap junctions. Gap junctions are dodecameric channels that connect the cytoplasm of adjoining cells. They are formed by the docking of two hexameric hemichannels, one from each cell membrane. Small molecules and ions diffuse from one cell to a neighboring cell via the central pore. The polypeptide is Gap junction alpha-3 protein (Gja3) (Rattus norvegicus (Rat)).